Consider the following 371-residue polypeptide: MTFSPEPAYQHGQAPRTAILLVNLGTPDAPTPKAVGRYLKEFLSDPRVVEIPRAAWLPLLYGVILPLRSRASALKYESIWLREAHMTGSPLLVYSERQAHALQRLLHQNGHEVTVACAMRYGNPSIGSVMEALRRQGCEQVLVLPMYPQYSGTTTATAFDEVFRVLGQWRNQPELRLVKHFHDHPAYISALQQQVSAYWARHGMPDFGRGDKLILSFHGVPRRTLELGDPYHCECLKTGRLLGEALGLQPGQYQVTFQSRFGKAEWLQPYTAPTLAELGKVGAGRVDVFCPGFPADCIETLEEIAMEGQTEFKVAGGKDFHFIPCMNDAAPWIAAMAEIALQHLQGWALATPHPHELEARRTRAQARGAAA.

Residues His-218 and Glu-299 each coordinate Fe cation.

Belongs to the ferrochelatase family.

The protein localises to the cytoplasm. The enzyme catalyses heme b + 2 H(+) = protoporphyrin IX + Fe(2+). Its pathway is porphyrin-containing compound metabolism; protoheme biosynthesis; protoheme from protoporphyrin-IX: step 1/1. Catalyzes the ferrous insertion into protoporphyrin IX. This is Ferrochelatase from Cupriavidus taiwanensis (strain DSM 17343 / BCRC 17206 / CCUG 44338 / CIP 107171 / LMG 19424 / R1) (Ralstonia taiwanensis (strain LMG 19424)).